The primary structure comprises 32 residues: Cathepsin B-like cysteine proteinase (32 aa).

The propeptide at 1-22 (KPNYKRQFEPFSDELIHYINLE) is activation peptide.

The protein belongs to the peptidase C1 family.

Thiol protease. The protein is Cathepsin B-like cysteine proteinase of Fasciola hepatica (Liver fluke).